A 249-amino-acid polypeptide reads, in one-letter code: MRGYFIAGNWKMHKTCAEAVALAQELVRELRGGPHTYMIAPSFTALDAVGKVLRGSNVLLGAQDVSSEEWGAHTGEVSVLQLEDLGVQVVIVGHSERRHGRGENDKLINQKVRRVLESGLRVILCVGERLQEYEAGCTNEVVGTQVRAGMADVCGSLMHNVTVAYEPVWAIGTGKTATPAQANAVHAHIRSVVREMYGAAIAEALCIQYGGSMKAENARALLAEEHIDGGLIGGASLEAASFVPIARSV.

Residue 9-11 (NWK) participates in substrate binding. H94 acts as the Electrophile in catalysis. The Proton acceptor role is filled by E166. Substrate is bound by residues G172, S212, and 233 to 234 (GG).

It belongs to the triosephosphate isomerase family. Homodimer.

It is found in the cytoplasm. It carries out the reaction D-glyceraldehyde 3-phosphate = dihydroxyacetone phosphate. Its pathway is carbohydrate biosynthesis; gluconeogenesis. The protein operates within carbohydrate degradation; glycolysis; D-glyceraldehyde 3-phosphate from glycerone phosphate: step 1/1. In terms of biological role, involved in the gluconeogenesis. Catalyzes stereospecifically the conversion of dihydroxyacetone phosphate (DHAP) to D-glyceraldehyde-3-phosphate (G3P). The sequence is that of Triosephosphate isomerase from Treponema pallidum (strain Nichols).